We begin with the raw amino-acid sequence, 493 residues long: Galactose-1-phosphate uridylyltransferase (493 aa).

It belongs to the galactose-1-phosphate uridylyltransferase type 2 family.

The protein localises to the cytoplasm. The enzyme catalyses alpha-D-galactose 1-phosphate + UDP-alpha-D-glucose = alpha-D-glucose 1-phosphate + UDP-alpha-D-galactose. It participates in carbohydrate metabolism; galactose metabolism. In Streptococcus thermophilus (strain CNRZ 1066), this protein is Galactose-1-phosphate uridylyltransferase.